The primary structure comprises 334 residues: GTP 3',8-cyclase (334 aa).

Positions 13–239 constitute a Radical SAM core domain; it reads RFHRKFYYLR…KVKAANDGPA (227 aa). R22 contacts GTP. 2 residues coordinate [4Fe-4S] cluster: C29 and C33. Y35 contributes to the S-adenosyl-L-methionine binding site. C36 contacts [4Fe-4S] cluster. Residue R73 participates in GTP binding. G77 serves as a coordination point for S-adenosyl-L-methionine. T104 contributes to the GTP binding site. S128 serves as a coordination point for S-adenosyl-L-methionine. Residue K165 coordinates GTP. M199 is an S-adenosyl-L-methionine binding site. Residues C262 and C265 each contribute to the [4Fe-4S] cluster site. 267–269 is a binding site for GTP; it reads RLR. C279 contacts [4Fe-4S] cluster.

The protein belongs to the radical SAM superfamily. MoaA family. Monomer and homodimer. The cofactor is [4Fe-4S] cluster.

The enzyme catalyses GTP + AH2 + S-adenosyl-L-methionine = (8S)-3',8-cyclo-7,8-dihydroguanosine 5'-triphosphate + 5'-deoxyadenosine + L-methionine + A + H(+). Its pathway is cofactor biosynthesis; molybdopterin biosynthesis. Its function is as follows. Catalyzes the cyclization of GTP to (8S)-3',8-cyclo-7,8-dihydroguanosine 5'-triphosphate. The sequence is that of GTP 3',8-cyclase from Vibrio vulnificus (strain YJ016).